A 121-amino-acid polypeptide reads, in one-letter code: Basic phospholipase A2 VRV-PL-V (121 aa).

Disulfide bonds link Cys-26–Cys-115, Cys-28–Cys-44, Cys-43–Cys-95, Cys-49–Cys-121, Cys-50–Cys-88, Cys-57–Cys-81, and Cys-75–Cys-86. Residues Tyr-27, Gly-29, and Gly-31 each contribute to the Ca(2+) site. Residue His-47 is part of the active site. Asp-48 is a binding site for Ca(2+). Residue Asp-89 is part of the active site.

It belongs to the phospholipase A2 family. Group II subfamily. D49 sub-subfamily. As to quaternary structure, monomer. It depends on Ca(2+) as a cofactor. In terms of tissue distribution, expressed by the venom gland.

It is found in the secreted. The enzyme catalyses a 1,2-diacyl-sn-glycero-3-phosphocholine + H2O = a 1-acyl-sn-glycero-3-phosphocholine + a fatty acid + H(+). Its function is as follows. Snake venom phospholipase A2 (PLA2) that has a low enzymatic activity. PLA2 catalyzes the calcium-dependent hydrolysis of the 2-acyl groups in 3-sn-phosphoglycerides. This Daboia russelii (Russel's viper) protein is Basic phospholipase A2 VRV-PL-V.